We begin with the raw amino-acid sequence, 350 residues long: Phosphate acyltransferase (350 aa).

Belongs to the PlsX family. Homodimer. Probably interacts with PlsY.

Its subcellular location is the cytoplasm. It carries out the reaction a fatty acyl-[ACP] + phosphate = an acyl phosphate + holo-[ACP]. The protein operates within lipid metabolism; phospholipid metabolism. Functionally, catalyzes the reversible formation of acyl-phosphate (acyl-PO(4)) from acyl-[acyl-carrier-protein] (acyl-ACP). This enzyme utilizes acyl-ACP as fatty acyl donor, but not acyl-CoA. The chain is Phosphate acyltransferase from Chelativorans sp. (strain BNC1).